Consider the following 323-residue polypeptide: Arginase (323 aa).

Positions 119, 142, 144, and 146 each coordinate Mn(2+). Substrate is bound by residues 144 to 148 (HADIN), 155 to 157 (SKN), and Asp198. Mn(2+) is bound by residues Asp247 and Asp249. Positions 261 and 292 each coordinate substrate.

It belongs to the arginase family. As to quaternary structure, homotrimer. Requires Mn(2+) as cofactor.

The enzyme catalyses L-arginine + H2O = urea + L-ornithine. It functions in the pathway nitrogen metabolism; urea cycle; L-ornithine and urea from L-arginine: step 1/1. This chain is Arginase (car1), found in Schizosaccharomyces pombe (strain 972 / ATCC 24843) (Fission yeast).